The chain runs to 337 residues: BRI1 kinase inhibitor 1 (337 aa).

Over residues 1 to 25 the composition is skewed to polar residues; the sequence is METNLQQVKNSSQTFSEKQNPKQEA. Disordered regions lie at residues 1 to 38 and 51 to 72; these read METNLQQVKNSSQTFSEKQNPKQEASPSPISSTCSSPS and SSSSKHISPTLRSPSKTTSSYQ. The segment covering 26–38 has biased composition (low complexity); it reads SPSPISSTCSSPS. Y211 carries the phosphotyrosine modification. The interval 270–310 is disordered; it reads SAPASMRTSPTNSGHLRVSTAGLSSSSGSTSSSSSDSTMEE. Residues 288-310 show a composition bias toward low complexity; the sequence is STAGLSSSSGSTSSSSSDSTMEE.

As to quaternary structure, interacts (via C-terminus) with BRI1 (via kinase domain). Post-translationally, phosphorylated on Tyr-211 in response to brassinosteroid perception, leading to its inactivation: once phosphorylated, displaced into the cytosol where it is inactive. Expressed in leaves, petioles, shoot apices, hypocotyls, roots and flowers.

The protein localises to the cell membrane. It is found in the cytoplasm. Its function is as follows. Negative regulator of brassinosteroid signaling. When associated to the membrane, limits the interaction of BRI1 with BAK1 by binding to the kinase-inactive form of BRI1. The sequence is that of BRI1 kinase inhibitor 1 (BKI1) from Arabidopsis thaliana (Mouse-ear cress).